A 174-amino-acid polypeptide reads, in one-letter code: Small ribosomal subunit protein uS5c (174 aa).

In terms of domain architecture, S5 DRBM spans 17–80; the sequence is WEERVVQVKR…TDAKKHLVTV (64 aa).

Belongs to the universal ribosomal protein uS5 family. Part of the 30S ribosomal subunit. Contacts protein S4.

The protein resides in the plastid. Its subcellular location is the chloroplast. Functionally, with S4 and S12 plays an important role in translational accuracy. The polypeptide is Small ribosomal subunit protein uS5c (rps5) (Porphyra purpurea (Red seaweed)).